The following is a 685-amino-acid chain: Ubiquitin carboxyl-terminal hydrolase BAP1 (685 aa).

In terms of domain architecture, UCH catalytic spans 4–235 (GWLELESDPG…IRFNLMAVVP (232 aa)). Cysteine 91 functions as the Nucleophile in the catalytic mechanism. The Proton donor role is filled by histidine 169. Disordered stretches follow at residues 273 to 325 (AQKP…RGPV), 363 to 425 (MQEE…PGVL), 440 to 493 (LSIK…SSPV), and 550 to 579 (KVSP…EVPQ). The segment covering 385–394 (DTDEEEEEET) has biased composition (acidic residues). Over residues 450–493 (PHSQPSPTPSNESTDTASEIGSAFNSPLRSPLRSANPTRPSSPV) the composition is skewed to polar residues. Positions 556–574 (NKVEEPRESSEPDTERSRV) are enriched in basic and acidic residues. In terms of domain architecture, ULD spans 626-654 (NYDEFICAFISMLAQEGMLASLVEQNISV). A disordered region spans residues 659 to 685 (GVSIGRLHKQRKPDRRKRSRPYKAKRQ). Positions 673-678 (RRKRSR) match the Nuclear localization signal motif.

It belongs to the peptidase C12 family. BAP1 subfamily. As to quaternary structure, component of the PR-DUB complex.

It localises to the cytoplasm. It is found in the nucleus. It carries out the reaction Thiol-dependent hydrolysis of ester, thioester, amide, peptide and isopeptide bonds formed by the C-terminal Gly of ubiquitin (a 76-residue protein attached to proteins as an intracellular targeting signal).. Deubiquitinating enzyme that plays a key role in chromatin by mediating deubiquitination of histone H2A. Catalytic component of the PR-DUB complex, a complex that specifically mediates deubiquitination of histone H2A monoubiquitinated at 'Lys-119' (H2AK119ub1). This is Ubiquitin carboxyl-terminal hydrolase BAP1 (bap1) from Xenopus tropicalis (Western clawed frog).